The chain runs to 405 residues: Formin-like protein 15a (405 aa).

The interval 1–31 (MSLVEISGSDAMAAPMPGRVPPPPPRPPPMP) is disordered. Over residues 18 to 31 (GRVPPPPPRPPPMP) the composition is skewed to pro residues. The region spanning 52–405 (FPRPAKKRAS…VCWFFVRLMI (354 aa)) is the FH2 domain.

The protein belongs to the formin-like family. Class-II subfamily.

The protein is Formin-like protein 15a (FH15A) of Arabidopsis thaliana (Mouse-ear cress).